The primary structure comprises 349 residues: Protein RecA (349 aa).

Position 65-72 (65-72 (GPESSGKT)) interacts with ATP.

This sequence belongs to the RecA family.

It localises to the cytoplasm. Functionally, can catalyze the hydrolysis of ATP in the presence of single-stranded DNA, the ATP-dependent uptake of single-stranded DNA by duplex DNA, and the ATP-dependent hybridization of homologous single-stranded DNAs. It interacts with LexA causing its activation and leading to its autocatalytic cleavage. The polypeptide is Protein RecA (Azotobacter vinelandii).